Reading from the N-terminus, the 171-residue chain is 3-hydroxydecanoyl-[acyl-carrier-protein] dehydratase (171 aa).

Residue H70 is part of the active site.

The protein belongs to the thioester dehydratase family. FabA subfamily. As to quaternary structure, homodimer.

It localises to the cytoplasm. The catalysed reaction is a (3R)-hydroxyacyl-[ACP] = a (2E)-enoyl-[ACP] + H2O. The enzyme catalyses (3R)-hydroxydecanoyl-[ACP] = (2E)-decenoyl-[ACP] + H2O. It carries out the reaction (2E)-decenoyl-[ACP] = (3Z)-decenoyl-[ACP]. It participates in lipid metabolism; fatty acid biosynthesis. Functionally, necessary for the introduction of cis unsaturation into fatty acids. Catalyzes the dehydration of (3R)-3-hydroxydecanoyl-ACP to E-(2)-decenoyl-ACP and then its isomerization to Z-(3)-decenoyl-ACP. Can catalyze the dehydratase reaction for beta-hydroxyacyl-ACPs with saturated chain lengths up to 16:0, being most active on intermediate chain length. This is 3-hydroxydecanoyl-[acyl-carrier-protein] dehydratase from Methylococcus capsulatus (strain ATCC 33009 / NCIMB 11132 / Bath).